The chain runs to 22 residues: MMLFITVYDINRKQKKRYGLHG.

The protein belongs to the asfivirus C84L family.

This is an uncharacterized protein from Ornithodoros (relapsing fever ticks).